The following is a 362-amino-acid chain: Peptide chain release factor 1 (362 aa).

Position 237 is an N5-methylglutamine (Q237). Residues 289–308 form a disordered region; the sequence is AAEISDTRRNLLGSGDRSDR.

Belongs to the prokaryotic/mitochondrial release factor family. In terms of processing, methylated by PrmC. Methylation increases the termination efficiency of RF1.

The protein localises to the cytoplasm. Peptide chain release factor 1 directs the termination of translation in response to the peptide chain termination codons UAG and UAA. The chain is Peptide chain release factor 1 from Vibrio cholerae serotype O1 (strain ATCC 39541 / Classical Ogawa 395 / O395).